A 91-amino-acid polypeptide reads, in one-letter code: Alpha-defensin 31 (91 aa).

The N-terminal stretch at 1–19 (MKKLVLLFALVLLAFQVQA) is a signal peptide. A propeptide spanning residues 20 to 65 (DSIQNTDEETKTEEQQGEEDQAVSVSFGDPQGSGLQDAALGWGRRC) is cleaved from the precursor. The disordered stretch occupies residues 22-55 (IQNTDEETKTEEQQGEEDQAVSVSFGDPQGSGLQ). Repeat copies occupy residues 65-67 (CPR), 68-70 (CPP), 71-73 (CPR), 77-79 (CPR), 80-82 (CPT), and 83-85 (CPR). The segment at 65–85 (CPRCPPCPRCSWCPRCPTCPR) is 6 X 3 AA tandem repeats of C-P-X.

It belongs to the alpha-defensin family. Paneth cells of the small bowel.

The protein localises to the secreted. Its function is as follows. Apparent precursor of a secreted, cationic, proline- and cysteine-rich peptide that contains Cys-Pro-Xaa repeats. Unlike cryptdin, the proposed mature peptide region lacks the structural motif characteristic of defensins. It may have microbicidal activities. This chain is Alpha-defensin 31, found in Mus musculus (Mouse).